The chain runs to 139 residues: Autophagy-related protein 31 (139 aa).

It belongs to the ATG31 family. As to quaternary structure, forms a stable complex with ATG17 and ATG29. Interacts directly with ATG29. The ATG17-ATG29-ATG31 complex interacts with the ATG1-ATG13 complex. Note=The interaction with the ATG1-ATG13 complex is induced by starvation.

Its subcellular location is the preautophagosomal structure. In terms of biological role, plays a role in starvation-induced autophagy. Involved in mitophagy. Functions with ATG17 and ATG29 at the preautophagosomal structure (PAS) in order to form normal autophagosomes under starvation conditions. This Kluyveromyces marxianus (strain DMKU3-1042 / BCC 29191 / NBRC 104275) (Yeast) protein is Autophagy-related protein 31.